We begin with the raw amino-acid sequence, 185 residues long: Large ribosomal subunit protein uL5 (185 aa).

Belongs to the universal ribosomal protein uL5 family. Part of the 50S ribosomal subunit; part of the 5S rRNA/L5/L18/L25 subcomplex. Contacts the 5S rRNA and the P site tRNA. Forms a bridge to the 30S subunit in the 70S ribosome.

Its function is as follows. This is one of the proteins that bind and probably mediate the attachment of the 5S RNA into the large ribosomal subunit, where it forms part of the central protuberance. In the 70S ribosome it contacts protein S13 of the 30S subunit (bridge B1b), connecting the 2 subunits; this bridge is implicated in subunit movement. Contacts the P site tRNA; the 5S rRNA and some of its associated proteins might help stabilize positioning of ribosome-bound tRNAs. This is Large ribosomal subunit protein uL5 from Rhizobium rhizogenes (strain K84 / ATCC BAA-868) (Agrobacterium radiobacter).